The sequence spans 381 residues: Estradiol 17-beta-dehydrogenase 2 (381 aa).

Residues 4-24 (FASESAWLCLAAAAVLGGTLL) form a helical; Signal-anchor for type II membrane protein membrane-spanning segment. 83–112 (QKAVLVTGADSGFGHGLAKHLDKLGFTVFA) serves as a coordination point for NAD(+). S220 contacts substrate. The active-site Proton acceptor is the Y233.

This sequence belongs to the short-chain dehydrogenases/reductases (SDR) family. Homodimer.

It is found in the endoplasmic reticulum membrane. It carries out the reaction 17beta-estradiol + NAD(+) = estrone + NADH + H(+). The enzyme catalyses testosterone + NAD(+) = androst-4-ene-3,17-dione + NADH + H(+). The catalysed reaction is 17beta-hydroxy-5alpha-androstan-3-one + NAD(+) = 5alpha-androstan-3,17-dione + NADH + H(+). It catalyses the reaction (20S)-hydroxypregn-4-en-3-one + NAD(+) = progesterone + NADH + H(+). Functionally, catalyzes the NAD-dependent oxidation of highly active 17beta-hydroxysteroids, such as estradiol (E2), testosterone (T), and dihydrotestosterone (DHT), to their less active forms and thus regulates the biological potency of these steroids. Oxidizes estradiol to estrone, testosterone to androstenedione, and dihydrotestosterone to 5alpha-androstan-3,17-dione. Also has 20-alpha-HSD activity. The polypeptide is Estradiol 17-beta-dehydrogenase 2 (Hsd17b2) (Mus musculus (Mouse)).